A 620-amino-acid polypeptide reads, in one-letter code: Glutathione-regulated potassium-efflux system protein KefC (620 aa).

The next 12 membrane-spanning stretches (helical) occupy residues 4 to 24 (HTLI…PIAV), 26 to 46 (LGLG…PWGL), 54 to 74 (SILH…GLEL), 90 to 110 (GALQ…LLGL), 114 to 134 (VAEL…MQAM), 149 to 169 (FAVL…IPLL), 178 to 198 (MGAF…VVLL), 218 to 238 (VFSA…EEVG), 270 to 290 (GLLL…GTLI), 294 to 314 (LRIV…LWLI), 327 to 347 (WFAV…GAAQ), and 359 to 379 (SLTL…VILN). The region spanning 399 to 518 (QPRVIIAGFG…AGVEKPERET (120 aa)) is the RCK N-terminal domain. The tract at residues 597 to 620 (GWQGTEEGKHTGNMADEPETKPSS) is disordered.

Belongs to the monovalent cation:proton antiporter 2 (CPA2) transporter (TC 2.A.37) family. KefC subfamily. Homodimer. Interacts with the regulatory subunit KefF.

The protein localises to the cell inner membrane. Its function is as follows. Pore-forming subunit of a potassium efflux system that confers protection against electrophiles. Catalyzes K(+)/H(+) antiport. The chain is Glutathione-regulated potassium-efflux system protein KefC from Escherichia coli (strain SMS-3-5 / SECEC).